The sequence spans 363 residues: Chorismate synthase (363 aa).

Residues arginine 48 and arginine 54 each contribute to the NADP(+) site. Residues 131-133 (RSS), 244-245 (NA), glycine 288, 303-307 (KPTSS), and arginine 329 contribute to the FMN site.

Belongs to the chorismate synthase family. In terms of assembly, homotetramer. FMNH2 is required as a cofactor.

The catalysed reaction is 5-O-(1-carboxyvinyl)-3-phosphoshikimate = chorismate + phosphate. It functions in the pathway metabolic intermediate biosynthesis; chorismate biosynthesis; chorismate from D-erythrose 4-phosphate and phosphoenolpyruvate: step 7/7. In terms of biological role, catalyzes the anti-1,4-elimination of the C-3 phosphate and the C-6 proR hydrogen from 5-enolpyruvylshikimate-3-phosphate (EPSP) to yield chorismate, which is the branch point compound that serves as the starting substrate for the three terminal pathways of aromatic amino acid biosynthesis. This reaction introduces a second double bond into the aromatic ring system. This chain is Chorismate synthase, found in Hyphomonas neptunium (strain ATCC 15444).